Here is a 359-residue protein sequence, read N- to C-terminus: Mannose-1-phosphate guanylyltransferase catalytic subunit beta (359 aa).

The interval 2–221 (KALILVGGFG…EGFWMDVGQP (220 aa)) is substrate-binding domain. Residue D109 participates in GDP-alpha-D-mannose binding. A Mg(2+)-binding site is contributed by D109. Residue K161 is part of the active site. D217 contributes to the GDP-alpha-D-mannose binding site. D217 serves as a coordination point for Mg(2+). Residues 244 to 359 (ATGNGIIGPV…SSIPEPEIIM (116 aa)) form a hexapeptide repeat domain region.

Belongs to the transferase hexapeptide repeat family. Component of the GMPPA-GMPPB mannose-1-phosphate guanylyltransferase complex composed of 4 GMPPA subunits and 8 gmppB subunits; the complex is organized into three layers, a central layer made up of 2 gmppA dimers sandwiched between two layers each made up of 2 gmppB dimers. gmppB catalytic activity is reduced when part of the complex and binding of GDP-alpha-D-Mannose by gmppA induces allosteric feedback inhibition of gmppB. Mg(2+) is required as a cofactor.

It catalyses the reaction alpha-D-mannose 1-phosphate + GTP + H(+) = GDP-alpha-D-mannose + diphosphate. The protein operates within nucleotide-sugar biosynthesis; GDP-alpha-D-mannose biosynthesis; GDP-alpha-D-mannose from alpha-D-mannose 1-phosphate (GTP route): step 1/1. Enzyme activity is reduced by incorporation into the GMPPA-GMPPB mannose-1-phosphate guanylyltransferase complex. Allosterically inhibited, when part of the GMPPA-GMPPB complex, by GDP-alpha-D-mannose binding to GMPPA. In terms of biological role, catalytic subunit of the GMPPA-GMPPB mannose-1-phosphate guanylyltransferase complex. Catalyzes the formation of GDP-mannose, an essential precursor of glycan moieties of glycoproteins and glycolipids. Can catalyze the reverse reaction in vitro. Together with GMPPA regulates GDP-alpha-D-mannose levels. This is Mannose-1-phosphate guanylyltransferase catalytic subunit beta (gmppB) from Dictyostelium discoideum (Social amoeba).